A 228-amino-acid chain; its full sequence is Ion-translocating oxidoreductase complex subunit E (228 aa).

The next 5 helical transmembrane spans lie at 24–44 (LLGL…LGLG), 73–93 (VFVL…NAFF), 95–115 (ELYL…AIIG), 130–150 (LADG…LGAL), and 184–204 (GFLL…LIAL).

This sequence belongs to the NqrDE/RnfAE family. The complex is composed of six subunits: RnfA, RnfB, RnfC, RnfD, RnfE and RnfG.

It localises to the cell inner membrane. Functionally, part of a membrane-bound complex that couples electron transfer with translocation of ions across the membrane. The chain is Ion-translocating oxidoreductase complex subunit E from Thioalkalivibrio sulfidiphilus (strain HL-EbGR7).